Here is a 602-residue protein sequence, read N- to C-terminus: MARLTKRRQADTKAIQHLWAAIEIIRNQKQIANIDRITKYMSRVHGMHPKETTRQLSLAVKDGLIVETLTVGCKGSKAGIEQEGYWLPGDEIDWETENHDWYCFECHLPGEVLICDLCFRVYHSKCLSDEFRLRDSSSPWQCPVCRSIKKKNTNKQEMGTYLRFIVSRMKERAIDLNKKGKDNKHPMYRRLVHSAVDVPTIQEKVNEGKYRSYEEFKADAQLLLHNTVIFYGADSEQADIARMLYKDTCHELDELQLCKNCFYLSNARPDNWFCYPCIPNHELVWAKMKGFGFWPAKVMQKEDNQVDVRFFGHHHQRAWIPSENIQDITVNIHRLHVKRSMGWKKACDELELHQRFLREGRFWKSKNEDRGEEEAESSISSTSNEQLKVTQEPRAKKGRRNQSVEPKKEEPEPETEAVSSSQEIPTMPQPIEKVSVSTQTKKLSASSPRMLHRSTQTTNDGVCQSMCHDKYTKIFNDFKDRMKSDHKRETERVVREALEKLRSEMEEEKRQAVNKAVANMQGEMDRKCKQVKEKCKEEFVEEIKKLATQHKQLISQTKKKQWCYNCEEEAMYHCCWNTSYCSIKCQQEHWHAEHKRTCRRKR.

An SAMD1-like winged helix (WH) domain is found at 6–82 (KRRQADTKAI…CKGSKAGIEQ (77 aa)). Residues 100–148 (DWYCFECHLPGEVLICDLCFRVYHSKCLSDEFRLRDSSSPWQCPVCRSI) form a PHD-type zinc finger. The Bromo domain maps to 149 to 255 (KKKNTNKQEM…KDTCHELDEL (107 aa)). Residues cysteine 258, cysteine 261, cysteine 277, and histidine 281 each coordinate Zn(2+). The region spanning 280–331 (NHELVWAKMKGFGFWPAKVMQKEDNQVDVRFFGHHHQRAWIPSENIQDITVN) is the PWWP domain. Lysine 366 participates in a covalent cross-link: Glycyl lysine isopeptide (Lys-Gly) (interchain with G-Cter in SUMO2). The disordered stretch occupies residues 366–459 (KNEDRGEEEA…MLHRSTQTTN (94 aa)). A Nuclear localization signal motif is present at residues 394–400 (RAKKGRR). Glycyl lysine isopeptide (Lys-Gly) (interchain with G-Cter in SUMO2) cross-links involve residues lysine 407 and lysine 408. At serine 421 the chain carries Phosphoserine. Over residues 435 to 459 (SVSTQTKKLSASSPRMLHRSTQTTN) the composition is skewed to polar residues. The segment at 452-572 (HRSTQTTNDG…CYNCEEEAMY (121 aa)) is interaction with human adenovirus E1A. Cysteine 563, cysteine 566, cysteine 574, cysteine 575, cysteine 581, cysteine 585, histidine 594, and cysteine 598 together coordinate Zn(2+). The segment at 563–598 (CYNCEEEAMYHCCWNTSYCSIKCQQEHWHAEHKRTC) adopts an MYND-type zinc-finger fold.

As to quaternary structure, homooligomer; forms homooligomers via its C-terminus. Interacts with histone H3.3 trimethylated at 'Lys-36' (H3.3K36me3). Interacts (via MYND-type zinc finger) with NCOR1. Interacts (via MYND-type zinc finger) with MGA protein (via PXLXP motif). Interacts (via MYND-type zinc finger) with EZH2. Interacts with EMSY and E2F6. Interacts with PIAS1 and UBE2I. (Microbial infection) Interacts (via MYND-type zinc finger) with human adenovirus early E1A protein (via PXLXP motif); this interaction inhibits E1A mediated transactivation. In terms of assembly, (Microbial infection) Interacts (via MYND-type zinc finger) with Epstein-Barr virus EBNA2 protein (via PXLXP motif). Interacts with Epstein-Barr virus-derived protein LMP1; leading to negatively regulate NF-kappa-B activation by Epstein-Barr virus-derived protein LMP1. Post-translationally, sumoylated following its interaction with PIAS1 and UBE2I. In terms of processing, ubiquitinated, leading to proteasomal degradation. Ubiquitous.

It localises to the nucleus. The protein resides in the chromosome. In terms of biological role, chromatin reader that specifically recognizes and binds histone H3.3 trimethylated at 'Lys-36' (H3.3K36me3) and regulates RNA polymerase II elongation. Does not bind other histone H3 subtypes (H3.1 or H3.2). Colocalizes with highly expressed genes and functions as a transcription corepressor by modulating RNA polymerase II at the elongation stage. Binds non-specifically to dsDNA. Acts as a tumor-suppressor by repressing a transcriptional program essential for tumor cell growth. (Microbial infection) Inhibits Epstein-Barr virus EBNA2-mediated transcriptional activation and host cell proliferation, through direct interaction. This Homo sapiens (Human) protein is Zinc finger MYND domain-containing protein 11.